We begin with the raw amino-acid sequence, 431 residues long: Serine--tRNA ligase (431 aa).

236–238 (TAE) contacts L-serine. ATP is bound at residue 267–269 (RSE). Glu-290 lines the L-serine pocket. Position 354–357 (354–357 (EISS)) interacts with ATP. Residue Ser-389 coordinates L-serine.

Belongs to the class-II aminoacyl-tRNA synthetase family. Type-1 seryl-tRNA synthetase subfamily. In terms of assembly, homodimer. The tRNA molecule binds across the dimer.

It is found in the cytoplasm. The catalysed reaction is tRNA(Ser) + L-serine + ATP = L-seryl-tRNA(Ser) + AMP + diphosphate + H(+). The enzyme catalyses tRNA(Sec) + L-serine + ATP = L-seryl-tRNA(Sec) + AMP + diphosphate + H(+). The protein operates within aminoacyl-tRNA biosynthesis; selenocysteinyl-tRNA(Sec) biosynthesis; L-seryl-tRNA(Sec) from L-serine and tRNA(Sec): step 1/1. Its function is as follows. Catalyzes the attachment of serine to tRNA(Ser). Is also able to aminoacylate tRNA(Sec) with serine, to form the misacylated tRNA L-seryl-tRNA(Sec), which will be further converted into selenocysteinyl-tRNA(Sec). The polypeptide is Serine--tRNA ligase (Herminiimonas arsenicoxydans).